The following is a 656-amino-acid chain: Pentatricopeptide repeat-containing protein At1g62260, mitochondrial (656 aa).

PPR repeat units follow at residues 70–104, 105–134, 135–169, 170–200, 203–227, 234–264, 280–310, 311–345, 346–372, 373–407, 408–438, 442–472, 474–508, 509–544, and 545–575; these read NTVT…DVVT, WNTM…MPSR, DSFS…NAVS, WSAM…DSSP, ALVA…YGSL, LVYA…IPDL, NVVS…MKDR, DTIS…DAHS, WNMM…TPEK, HTVS…GEKP, DPHT…VVKT, DVPV…MKLK, EVIT…GIYP, SHIT…KIEP, and QMEH…MPFE. The type E motif stretch occupies residues 580–655; the sequence is VWGALLDACR…ERGSSWVDSS (76 aa).

This sequence belongs to the PPR family. PCMP-E subfamily.

The protein resides in the mitochondrion. This is Pentatricopeptide repeat-containing protein At1g62260, mitochondrial (PCMP-E10) from Arabidopsis thaliana (Mouse-ear cress).